Here is a 162-residue protein sequence, read N- to C-terminus: SsrA-binding protein (162 aa).

This sequence belongs to the SmpB family.

It is found in the cytoplasm. Functionally, required for rescue of stalled ribosomes mediated by trans-translation. Binds to transfer-messenger RNA (tmRNA), required for stable association of tmRNA with ribosomes. tmRNA and SmpB together mimic tRNA shape, replacing the anticodon stem-loop with SmpB. tmRNA is encoded by the ssrA gene; the 2 termini fold to resemble tRNA(Ala) and it encodes a 'tag peptide', a short internal open reading frame. During trans-translation Ala-aminoacylated tmRNA acts like a tRNA, entering the A-site of stalled ribosomes, displacing the stalled mRNA. The ribosome then switches to translate the ORF on the tmRNA; the nascent peptide is terminated with the 'tag peptide' encoded by the tmRNA and targeted for degradation. The ribosome is freed to recommence translation, which seems to be the essential function of trans-translation. In Buchnera aphidicola subsp. Acyrthosiphon pisum (strain 5A), this protein is SsrA-binding protein.